Consider the following 232-residue polypeptide: MSGFTFKQFHINQNSCAMKVSTDGILLGAWADVKHCKNILDMGSGTGLLALMLAQRTEENCQIQAVELDPIAAKQAQENINNSVWKNRIQLIQTDIQHFLQTTAQTFDLIVANPPYFEQGIACKNEERELARYTKQSHLNWLEWAATRLSENGRISFVLPYDAGKTLIKSTALFCIKQTNVITKIGKTPQRMLLTFAKQPQVLMQDQLVIYDADNQYTEAFIELTKDFYLKF.

The protein belongs to the methyltransferase superfamily. tRNA (adenine-N(6)-)-methyltransferase family.

It localises to the cytoplasm. The enzyme catalyses adenosine(37) in tRNA1(Val) + S-adenosyl-L-methionine = N(6)-methyladenosine(37) in tRNA1(Val) + S-adenosyl-L-homocysteine + H(+). Its function is as follows. Specifically methylates the adenine in position 37 of tRNA(1)(Val) (anticodon cmo5UAC). This chain is tRNA1(Val) (adenine(37)-N6)-methyltransferase, found in Haemophilus influenzae (strain PittEE).